The following is a 367-amino-acid chain: Splicing factor U2AF-associated protein 2 (367 aa).

The interval 36–104 (YDPNSLKMNK…SKSENSEASP (69 aa)) is disordered. Over residues 61 to 78 (TEGKESSNGEDRHTKRLY) the composition is skewed to basic and acidic residues. RRM domains follow at residues 112–193 (VYIQ…KMRV) and 268–329 (LLID…VVEA).

This sequence belongs to the HTATSF1 family. Interacts with the U2AF large and U2AF small subunits.

Its function is as follows. Has a role in pre-mRNA splicing. In Schizosaccharomyces pombe (strain 972 / ATCC 24843) (Fission yeast), this protein is Splicing factor U2AF-associated protein 2 (uap2).